A 684-amino-acid chain; its full sequence is Glycine--tRNA ligase beta subunit (684 aa).

The protein belongs to the class-II aminoacyl-tRNA synthetase family. In terms of assembly, tetramer of two alpha and two beta subunits.

Its subcellular location is the cytoplasm. It carries out the reaction tRNA(Gly) + glycine + ATP = glycyl-tRNA(Gly) + AMP + diphosphate. This Pseudomonas aeruginosa (strain LESB58) protein is Glycine--tRNA ligase beta subunit.